The chain runs to 141 residues: ATP synthase epsilon chain (141 aa).

Belongs to the ATPase epsilon chain family. As to quaternary structure, F-type ATPases have 2 components, CF(1) - the catalytic core - and CF(0) - the membrane proton channel. CF(1) has five subunits: alpha(3), beta(3), gamma(1), delta(1), epsilon(1). CF(0) has three main subunits: a, b and c.

It localises to the cell inner membrane. Its function is as follows. Produces ATP from ADP in the presence of a proton gradient across the membrane. This Gluconacetobacter diazotrophicus (strain ATCC 49037 / DSM 5601 / CCUG 37298 / CIP 103539 / LMG 7603 / PAl5) protein is ATP synthase epsilon chain.